A 479-amino-acid chain; its full sequence is MAWNTNLRWRLPLTCLLLQVIMVILFGVFVRYDFEADAHWWSERTHKNLSDMENEFYYRYPSFQDVHVMVFVGFGFLMTFLQRYGFSAVGFNFLLAAFGIQWALLMQGWFHFLQDRYIVVGVENLINADFCVASVCVAFGAVLGKVSPIQLLIMTFFQVTLFAVNEFILLNLLKVKDAGGSMTIHTFGAYFGLTVTRILYRRNLEQSKERQNSVYQSDLFAMIGTLFLWMYWPSFNSAISYHGDSQHRAAINTYCSLAACVLTSVAISSALHKKGKLDMVHIQNATLAGGVAVGTAAEMMLMPYGALIIGFVCGIISTLGFVYLTPFLESRLHIQDTCGINNLHGIPGIIGGIVGAVTAASASLEVYGKEGLVHSFDFQGFNGDWTARTQGKFQIYGLLVTLAMALMGGIIVGLILRLPFWGQPSDENCFEDAVYWEMPEGNSTVYIPEDPTFKPSGPSVPSVPMVSPLPMASSVPLVP.

The Cytoplasmic portion of the chain corresponds to 1–9; that stretch reads MAWNTNLRW. The chain crosses the membrane as a helical span at residues 10–30; the sequence is RLPLTCLLLQVIMVILFGVFV. At 31-60 the chain is on the extracellular side; sequence RYDFEADAHWWSERTHKNLSDMENEFYYRY. Asn48 carries an N-linked (GlcNAc...) asparagine glycan. A helical membrane pass occupies residues 61–81; that stretch reads PSFQDVHVMVFVGFGFLMTFL. Residues 82 to 85 are Cytoplasmic-facing; that stretch reads QRYG. Residues 86-106 traverse the membrane as a helical segment; sequence FSAVGFNFLLAAFGIQWALLM. Residues 107-123 lie on the Extracellular side of the membrane; sequence QGWFHFLQDRYIVVGVE. The helical transmembrane segment at 124 to 144 threads the bilayer; it reads NLINADFCVASVCVAFGAVLG. Residues 145-148 are Cytoplasmic-facing; sequence KVSP. Residues 149–169 traverse the membrane as a helical segment; that stretch reads IQLLIMTFFQVTLFAVNEFIL. Residues 170 to 177 are Extracellular-facing; the sequence is LNLLKVKD. Residues 178–200 form a helical membrane-spanning segment; sequence AGGSMTIHTFGAYFGLTVTRILY. The Cytoplasmic segment spans residues 201-218; sequence RRNLEQSKERQNSVYQSD. The helical transmembrane segment at 219–239 threads the bilayer; sequence LFAMIGTLFLWMYWPSFNSAI. The Extracellular portion of the chain corresponds to 240–250; the sequence is SYHGDSQHRAA. A helical transmembrane segment spans residues 251–271; the sequence is INTYCSLAACVLTSVAISSAL. Residues 272-281 lie on the Cytoplasmic side of the membrane; sequence HKKGKLDMVH. The chain crosses the membrane as a helical span at residues 282 to 302; sequence IQNATLAGGVAVGTAAEMMLM. Position 303 (Pro303) is a topological domain, extracellular. Residues 304-324 form a helical membrane-spanning segment; that stretch reads YGALIIGFVCGIISTLGFVYL. Residues 325–345 lie on the Cytoplasmic side of the membrane; that stretch reads TPFLESRLHIQDTCGINNLHG. Residues 346–366 traverse the membrane as a helical segment; that stretch reads IPGIIGGIVGAVTAASASLEV. Residues 367–394 lie on the Extracellular side of the membrane; that stretch reads YGKEGLVHSFDFQGFNGDWTARTQGKFQ. A helical transmembrane segment spans residues 395 to 415; that stretch reads IYGLLVTLAMALMGGIIVGLI. Over 416 to 479 the chain is Cytoplasmic; that stretch reads LRLPFWGQPS…PMASSVPLVP (64 aa).

Belongs to the ammonium transporter (TC 2.A.49) family. Rh subfamily. In terms of assembly, homotrimer. Post-translationally, N-glycosylated. In terms of tissue distribution, expressed in brain, testis, placenta, pancreas, esophagus and prostate. Expressed in squamous epithelial tissues (at protein level). Expressed in kidney.

It localises to the cell membrane. The protein localises to the apical cell membrane. The catalysed reaction is NH4(+)(in) = NH4(+)(out). The enzyme catalyses methylamine(out) = methylamine(in). It catalyses the reaction CO2(out) = CO2(in). In terms of biological role, ammonium transporter involved in the maintenance of acid-base homeostasis. Transports ammonium and its related derivative methylammonium across the plasma membrane of epithelial cells likely contributing to renal transepithelial ammonia transport and ammonia metabolism. Postulated to primarily mediate an electroneutral bidirectional transport of NH3 ammonia species according to a mechanism that implies interaction of an NH4(+) ion with acidic residues of the pore entry followed by dissociation of NH4(+) into NH3 and H(+). As a result NH3 transits through the central pore and is protonated on the extracellular side reforming NH4(+). May act as a CO2 channel providing for renal acid secretion. The protein is Ammonium transporter Rh type C (RHCG) of Homo sapiens (Human).